The following is an 88-amino-acid chain: MGTARFLSAVLLLSVLLMVTFPALLSAEYHDGRVDICSLPSDSGDCLRLFEMWYFDGTTCTKFVYGGYGGNDNRFPTEKACMKRCAKV.

Residues 1-27 (MGTARFLSAVLLLSVLLMVTFPALLSA) form the signal peptide. Residues 28–33 (EYHDGR) constitute a propeptide that is removed on maturation. In terms of domain architecture, BPTI/Kunitz inhibitor spans 37–85 (CSLPSDSGDCLRLFEMWYFDGTTCTKFVYGGYGGNDNRFPTEKACMKRC). Disulfide bonds link C37–C85 and C60–C81.

It belongs to the venom Kunitz-type family. 03 (sub-Kunitz) subfamily. As to expression, expressed by the venom gland.

The protein resides in the secreted. Its function is as follows. Serine protease inhibitor that inhibits trypsin at a molar ratio of 1:1. This Cyriopagopus schmidti (Chinese bird spider) protein is Kunitz-type U15-theraphotoxin-Hs1f.